Consider the following 627-residue polypeptide: (R)-linalool synthase, chloroplastic (627 aa).

The N-terminal 21 residues, 1–21 (MAFVSIAPLASRCCVHKSFVS), are a transit peptide targeting the chloroplast. Positions 378, 382, and 530 each coordinate Mg(2+). The DDXXD motif motif lies at 378–382 (DDIYD).

This sequence belongs to the terpene synthase family. Tpsd subfamily. The cofactor is Mg(2+). Mn(2+) serves as cofactor.

The protein resides in the plastid. Its subcellular location is the chloroplast. The catalysed reaction is (2E)-geranyl diphosphate + H2O = (R)-linalool + diphosphate. It participates in terpene metabolism; oleoresin biosynthesis. In terms of biological role, terpene synthase (TPS) involved in the biosynthesis of monoterpene natural products included in conifer oleoresin secretions and volatile emissions; these compounds contribute to biotic and abiotic stress defense against herbivores and pathogens. Catalyzes the conversion of (2E)-geranyl diphosphate (GPP) to (R)-linalool. The chain is (R)-linalool synthase, chloroplastic from Picea glauca (White spruce).